Here is a 336-residue protein sequence, read N- to C-terminus: Inositol 2-dehydrogenase (336 aa).

This sequence belongs to the Gfo/Idh/MocA family. As to quaternary structure, homotetramer.

It catalyses the reaction myo-inositol + NAD(+) = scyllo-inosose + NADH + H(+). Functionally, involved in the oxidation of myo-inositol (MI) to 2-keto-myo-inositol (2KMI or 2-inosose). The chain is Inositol 2-dehydrogenase from Pseudomonas fluorescens (strain SBW25).